Consider the following 2604-residue polypeptide: Probable polyketide synthase 17 (2604 aa).

Residues 11–433 form the Ketosynthase family 3 (KS3) domain; that stretch reads NDDIAIIGMG…GSNCHMILSE (423 aa). Catalysis depends on for beta-ketoacyl synthase activity residues C179, H316, and H356. An acyl/malonyl transferases region spans residues 631-664; the sequence is GISPSIVVGHSFGEIPSALFSDVISLETAVKIVY. The active-site For acyl/malonyl transferase activity is the S641. The tract at residues 937–1057 is N-terminal hotdog fold; sequence NNLLGHDQFA…GRIGLFKHNP (121 aa). The PKS/mFAS DH domain occupies 937–1216; sequence NNLLGHDQFA…CTSLIRLKKQ (280 aa). Catalysis depends on H968, which acts as the Proton acceptor; for dehydratase activity. Residues 1072–1216 form a C-terminal hotdog fold region; that stretch reads SFTTLTKSEV…CTSLIRLKKQ (145 aa). D1132 (proton donor; for dehydratase activity) is an active-site residue. The interval 1357 to 1407 is disordered; it reads GESEHFSPSNPSSPNDTPRNNSNNCSSKNNAASSDDADDDTNNEETINQLN. The span at 1363-1390 shows a compositional bias: low complexity; it reads SPSNPSSPNDTPRNNSNNCSSKNNAASS. One can recognise a Carrier domain in the interval 2507–2584; it reads GDSGSTQAKV…SIIQRISSKS (78 aa). Position 2544 is an O-(pantetheine 4'-phosphoryl)serine (S2544). The span at 2581–2597 shows a compositional bias: low complexity; the sequence is SSKSTSTSTPNPTNTSK. The tract at residues 2581-2604 is disordered; it reads SSKSTSTSTPNPTNTSKQTATKKT.

It depends on pantetheine 4'-phosphate as a cofactor.

Functionally, probable polyketide synthase. The chain is Probable polyketide synthase 17 (pks17) from Dictyostelium discoideum (Social amoeba).